Consider the following 448-residue polypeptide: Ribulose bisphosphate carboxylase large chain (448 aa).

Residues 1 to 2 (MS) constitute a propeptide that is removed on maturation. N-acetylproline is present on P3. An N6,N6,N6-trimethyllysine modification is found at K14. Residues N122 and T172 each coordinate substrate. Residue K174 is the Proton acceptor of the active site. Position 176 (K176) interacts with substrate. Positions 200, 202, and 203 each coordinate Mg(2+). K200 is subject to N6-carboxylysine. H293 serves as the catalytic Proton acceptor. Substrate is bound by residues R294, H326, and S378.

The protein belongs to the RuBisCO large chain family. Type I subfamily. In terms of assembly, heterohexadecamer of 8 large chains and 8 small chains; disulfide-linked. The disulfide link is formed within the large subunit homodimers. The cofactor is Mg(2+). Post-translationally, the disulfide bond which can form in the large chain dimeric partners within the hexadecamer appears to be associated with oxidative stress and protein turnover.

Its subcellular location is the plastid. It localises to the chloroplast. It catalyses the reaction 2 (2R)-3-phosphoglycerate + 2 H(+) = D-ribulose 1,5-bisphosphate + CO2 + H2O. The enzyme catalyses D-ribulose 1,5-bisphosphate + O2 = 2-phosphoglycolate + (2R)-3-phosphoglycerate + 2 H(+). In terms of biological role, ruBisCO catalyzes two reactions: the carboxylation of D-ribulose 1,5-bisphosphate, the primary event in carbon dioxide fixation, as well as the oxidative fragmentation of the pentose substrate in the photorespiration process. Both reactions occur simultaneously and in competition at the same active site. This is Ribulose bisphosphate carboxylase large chain from Dichapetalum crassifolium.